The primary structure comprises 381 residues: UDP-4-amino-4-deoxy-L-arabinose--oxoglutarate aminotransferase (381 aa).

K182 carries the N6-(pyridoxal phosphate)lysine modification.

The protein belongs to the DegT/DnrJ/EryC1 family. ArnB subfamily. In terms of assembly, homodimer. Pyridoxal 5'-phosphate serves as cofactor.

It catalyses the reaction UDP-4-amino-4-deoxy-beta-L-arabinose + 2-oxoglutarate = UDP-beta-L-threo-pentopyranos-4-ulose + L-glutamate. The protein operates within nucleotide-sugar biosynthesis; UDP-4-deoxy-4-formamido-beta-L-arabinose biosynthesis; UDP-4-deoxy-4-formamido-beta-L-arabinose from UDP-alpha-D-glucuronate: step 2/3. Its pathway is bacterial outer membrane biogenesis; lipopolysaccharide biosynthesis. In terms of biological role, catalyzes the conversion of UDP-4-keto-arabinose (UDP-Ara4O) to UDP-4-amino-4-deoxy-L-arabinose (UDP-L-Ara4N). The modified arabinose is attached to lipid A and is required for resistance to polymyxin and cationic antimicrobial peptides. This chain is UDP-4-amino-4-deoxy-L-arabinose--oxoglutarate aminotransferase, found in Edwardsiella ictaluri (strain 93-146).